A 226-amino-acid polypeptide reads, in one-letter code: Flagellar L-ring protein (226 aa).

The first 15 residues, 1 to 15 (MRILGLSAALLILGG), serve as a signal peptide directing secretion. The N-palmitoyl cysteine moiety is linked to residue Cys-16. Cys-16 carries the S-diacylglycerol cysteine lipid modification.

It belongs to the FlgH family. The basal body constitutes a major portion of the flagellar organelle and consists of four rings (L,P,S, and M) mounted on a central rod.

Its subcellular location is the cell outer membrane. It localises to the bacterial flagellum basal body. Assembles around the rod to form the L-ring and probably protects the motor/basal body from shearing forces during rotation. This is Flagellar L-ring protein from Alteromonas mediterranea (strain DSM 17117 / CIP 110805 / LMG 28347 / Deep ecotype).